A 439-amino-acid polypeptide reads, in one-letter code: Proline--tRNA ligase (439 aa).

This sequence belongs to the class-II aminoacyl-tRNA synthetase family. ProS type 2 subfamily. As to quaternary structure, homodimer.

Its subcellular location is the cytoplasm. The catalysed reaction is tRNA(Pro) + L-proline + ATP = L-prolyl-tRNA(Pro) + AMP + diphosphate. Functionally, catalyzes the attachment of proline to tRNA(Pro) in a two-step reaction: proline is first activated by ATP to form Pro-AMP and then transferred to the acceptor end of tRNA(Pro). This Rhodopseudomonas palustris (strain HaA2) protein is Proline--tRNA ligase.